The sequence spans 202 residues: Putative 3-methyladenine DNA glycosylase (202 aa).

Belongs to the DNA glycosylase MPG family.

The sequence is that of Putative 3-methyladenine DNA glycosylase from Alkaliphilus oremlandii (strain OhILAs) (Clostridium oremlandii (strain OhILAs)).